The chain runs to 310 residues: Coproporphyrin III ferrochelatase (310 aa).

Residues Y13, R30, 46–47 (RY), S54, and Y125 each bind Fe-coproporphyrin III. 2 residues coordinate Fe(2+): H181 and E262.

It belongs to the ferrochelatase family.

It localises to the cytoplasm. The enzyme catalyses Fe-coproporphyrin III + 2 H(+) = coproporphyrin III + Fe(2+). It functions in the pathway porphyrin-containing compound metabolism; protoheme biosynthesis. In terms of biological role, involved in coproporphyrin-dependent heme b biosynthesis. Catalyzes the insertion of ferrous iron into coproporphyrin III to form Fe-coproporphyrin III. This chain is Coproporphyrin III ferrochelatase, found in Halalkalibacterium halodurans (strain ATCC BAA-125 / DSM 18197 / FERM 7344 / JCM 9153 / C-125) (Bacillus halodurans).